We begin with the raw amino-acid sequence, 110 residues long: UPF0060 membrane protein MT2717 (110 aa).

Transmembrane regions (helical) follow at residues 6 to 26 (ILLF…VWQG), 32 to 52 (GWLW…FATL), 61 to 81 (VLAA…MALD), and 90 to 110 (VIGA…PRGH).

Belongs to the UPF0060 family.

The protein resides in the cell membrane. The polypeptide is UPF0060 membrane protein MT2717 (Mycobacterium tuberculosis (strain CDC 1551 / Oshkosh)).